The sequence spans 88 residues: Large ribosomal subunit protein bL27 (88 aa).

The disordered stretch occupies residues 1–21 (MAHKKGVGSSRNGRDSQPKML).

It belongs to the bacterial ribosomal protein bL27 family.

This chain is Large ribosomal subunit protein bL27, found in Pelotomaculum thermopropionicum (strain DSM 13744 / JCM 10971 / SI).